The primary structure comprises 408 residues: Phosphoglycerate kinase (408 aa).

Residues 22–24 (DIN), Arg-39, 60–63 (HQSR), Arg-117, and Arg-157 contribute to the substrate site. ATP contacts are provided by residues Glu-332 and 358 to 361 (GGHT).

This sequence belongs to the phosphoglycerate kinase family. In terms of assembly, monomer.

It localises to the cytoplasm. It catalyses the reaction (2R)-3-phosphoglycerate + ATP = (2R)-3-phospho-glyceroyl phosphate + ADP. Its pathway is carbohydrate degradation; glycolysis; pyruvate from D-glyceraldehyde 3-phosphate: step 2/5. This Thermoplasma acidophilum (strain ATCC 25905 / DSM 1728 / JCM 9062 / NBRC 15155 / AMRC-C165) protein is Phosphoglycerate kinase (pgk).